We begin with the raw amino-acid sequence, 299 residues long: Prohibitin-2 (299 aa).

A2 carries the post-translational modification N-acetylalanine. The necessary for transcriptional repression stretch occupies residues 19 to 49; it reads MGTALKLLLGAGAVAYGVRESVFTVEGGHRA. Y128 carries the phosphotyrosine modification. K147 is modified (N6-acetyllysine). The tract at residues 150–174 is necessary for transcriptional repression; the sequence is ASQLITQRAQVSLLIRRELTERAKD. Phosphoserine is present on S151. The stretch at 190–238 forms a coiled coil; that stretch reads SREYTAAVEAKQVAQQEAQRAQFLVEKAKQEQRQKIVQAEGEAEAAKML. 4 positions are modified to N6-acetyllysine: K200, K236, K250, and K262.

This sequence belongs to the prohibitin family. The mitochondrial prohibitin complex consists of two subunits (PHB1 and PHB2), assembled into a membrane-associated ring-shaped supercomplex of approximately 1 mDa. Interacts with ESR1, HDAC1 and HDAC5. Interacts with ZNF703. Interacts with STOML2. Interacts with ARFGEF3. Interacts with SPHK2. Interacts with COX4I1; the interaction associates PHB2 with COX. Interacts with MAP1LC3B (membrane-bound form LC3-II); the interaction is direct and upon mitochondrial depolarization and proteasome-dependent outer membrane rupture. Interacts with IGFBP6 (via C-terminal domain). Interacts with CLPB. Interacts with CD86 (via cytoplasmic domain); the interactions increases after priming with CD40. Interacts with AFG3L2. Interacts with DNAJC19. Interacts with AKT2; this interaction may be important for myogenic differentiation. Phosphorylated. Tyrosine phosphorylation is indirectly stimulated by IGFBP6.

It localises to the mitochondrion inner membrane. The protein resides in the cytoplasm. The protein localises to the nucleus. Its subcellular location is the cell membrane. Its function is as follows. Protein with pleiotropic attributes mediated in a cell-compartment- and tissue-specific manner, which include the plasma membrane-associated cell signaling functions, mitochondrial chaperone, and transcriptional co-regulator of transcription factors and sex steroid hormones in the nucleus. Functionally, in the mitochondria, together with PHB, forms large ring complexes (prohibitin complexes) in the inner mitochondrial membrane (IMM) and functions as a chaperone protein that stabilizes mitochondrial respiratory enzymes and maintains mitochondrial integrity in the IMM, which is required for mitochondrial morphogenesis, neuronal survival, and normal lifespan. The prohibitin complex, with DNAJC19, regulates cardiolipin remodeling and the protein turnover of OMA1 in a cardiolipin-binding manner. Also regulates cytochrome-c oxidase assembly (COX) and mitochondrial respiration. Binding to sphingoid 1-phosphate (SPP) modulates its regulator activity. Has a key role of mitophagy receptor involved in targeting mitochondria for autophagic degradation. Involved in mitochondrial-mediated antiviral innate immunity, activates RIG-I-mediated signal transduction and production of IFNB1 and pro-inflammatory cytokine IL6. In terms of biological role, in the nucleus, serves as transcriptional co-regulator. Acts as a mediator of transcriptional repression by nuclear hormone receptors via recruitment of histone deacetylases. Functions as an estrogen receptor (ER)-selective coregulator that potentiates the inhibitory activities of antiestrogens and represses the activity of estrogens. Competes with NCOA1 for modulation of ER transcriptional activity. In the plasma membrane, is involved in IGFBP6-induced cell migration. Cooperates with CD86 to mediate CD86-signaling in B lymphocytes that regulates the level of IgG1 produced through the activation of distal signaling intermediates. Upon CD40 engagement, required to activate NF-kappa-B signaling pathway via phospholipase C and protein kinase C activation. The chain is Prohibitin-2 (PHB2) from Pongo abelii (Sumatran orangutan).